Reading from the N-terminus, the 429-residue chain is Queuine tRNA-ribosyltransferase accessory subunit 2 (429 aa).

Zn(2+) contacts are provided by C330, C332, C335, and H361.

This sequence belongs to the queuine tRNA-ribosyltransferase family. QTRT2 subfamily. Heterodimer of a catalytic subunit and an accessory subunit. The cofactor is Zn(2+).

It is found in the cytoplasm. In terms of biological role, non-catalytic subunit of the queuine tRNA-ribosyltransferase (TGT) that catalyzes the base-exchange of a guanine (G) residue with queuine (Q) at position 34 (anticodon wobble position) in tRNAs with GU(N) anticodons (tRNA-Asp, -Asn, -His and -Tyr), resulting in the hypermodified nucleoside queuosine (7-(((4,5-cis-dihydroxy-2-cyclopenten-1-yl)amino)methyl)-7-deazaguanosine). This chain is Queuine tRNA-ribosyltransferase accessory subunit 2, found in Culex quinquefasciatus (Southern house mosquito).